The chain runs to 940 residues: Serine/threonine-protein phosphatase 1 regulatory subunit 10 (940 aa).

Residues 1-348 (MGSGPIDPKE…EPAPPSEAME (348 aa)) form an interaction with TOX4 region. The 75-residue stretch at 73–147 (KLLNNWLTYS…SDWMAVIRSQ (75 aa)) folds into the TFIIS N-terminal domain. Disordered regions lie at residues 147 to 210 (QSST…KFRS), 248 to 270 (NVAAPGDATPPAEKKYKPLNTTP), 304 to 400 (KIKK…KSVT), and 534 to 557 (VETLEPGGSGGSPDGAGGSKLPPV). Basic and acidic residues-rich tracts occupy residues 153–166 (AEKDKKKRKDEGKS) and 174–196 (PLTEVKAETRAEEAPEKKREKPK). Lys179 is covalently cross-linked (Glycyl lysine isopeptide (Lys-Gly) (interchain with G-Cter in SUMO2)). Residue Thr256 is modified to Phosphothreonine. A Glycyl lysine isopeptide (Lys-Gly) (interchain with G-Cter in SUMO2) cross-link involves residue Lys262. Position 313 is a phosphoserine (Ser313). Over residues 325–336 (KTSTEPSTAKPS) the composition is skewed to low complexity. Positions 357–433 (PPVEVPELMD…NKIKDFGEAA (77 aa)) are necessary for interaction with PPP1CA. Ser382 is modified (phosphoserine). The necessary for interaction with PPP1CC stretch occupies residues 393–408 (GRKRKSVTWPEEGKLR). The PP1-binding motif motif lies at 394–423 (RKRKSVTWPEEGKLREYFYFELDETERVNV). A Phosphoserine; by PKA modification is found at Ser398. The interval 418–619 (TERVNVNKIK…IKQMLVPHGL (202 aa)) is interaction with WDR82. Positions 540 to 551 (GGSGGSPDGAGG) are enriched in gly residues. Phosphoserine is present on residues Ser545 and Ser591. The interval 617–905 (HGLLGPGPIA…HDGGHSHGGD (289 aa)) is disordered. A compositionally biased stretch (pro residues) spans 644-655 (PPGPGGPMPGPH). An Omega-N-methylarginine modification is found at Arg665. Positions 676–690 (GDPFWDGPGDPMRGG) are enriched in low complexity. Residues Arg693 and Arg738 each carry the omega-N-methylarginine modification. Gly residues-rich tracts occupy residues 725-763 (ARGGRSGGGPPNGRGGPGGGMVGGGGHRPHEGPGGGMGN) and 789-844 (GSMG…GSGG). Composition is skewed to basic and acidic residues over residues 861-886 (PHDVPGHRGHDHRGPPPHEHRGHDGP) and 894-903 (RGHDGGHSHG). The segment at 906-934 (MSNRPVCRHFMMKGNCRYENNCAFYHPGV) adopts a C3H1-type zinc-finger fold.

Component of the PNUTS-PP1 complex (also named PTW/PP1 complex), composed of PPP1R10/PNUTS, TOX4, WDR82, and PPP1CA (or PPP1CB or PPP1CC). In terms of processing, phosphorylated on Ser-398 by PKA within the region necessary for interaction with PPP1CA.

Its subcellular location is the nucleus. It is found in the chromosome. Its function is as follows. Substrate-recognition component of the PNUTS-PP1 protein phosphatase complex, a protein phosphatase 1 (PP1) complex that promotes RNA polymerase II transcription pause-release, allowing transcription elongation. Promoter-proximal pausing by RNA polymerase II is a transcription halt following transcription initiation but prior to elongation, which acts as a checkpoint to control that transcripts are favorably configured for transcriptional elongation. The PNUTS-PP1 complex mediates the release of RNA polymerase II from promoter-proximal region of genes by catalyzing dephosphorylation of proteins involved in transcription, such as AFF4, CDK9, MEPCE, INTS12, NCBP1, POLR2M/GDOWN1 and SUPT6H. The PNUTS-PP1 complex also regulates RNA polymerase II transcription termination by mediating dephosphorylation of SUPT5H in termination zones downstream of poly(A) sites, thereby promoting deceleration of RNA polymerase II transcription. PNUTS-PP1 complex is also involved in the response to replication stress by mediating dephosphorylation of POLR2A at 'Ser-5' of the CTD, promoting RNA polymerase II degradation. The PNUTS-PP1 complex also plays a role in the control of chromatin structure and cell cycle progression during the transition from mitosis into interphase. PNUTS-PP1 complex mediates dephosphorylation of MYC, promoting MYC stability by preventing MYC ubiquitination by the SCF(FBXW7) complex. In addition to acts as a substrate-recognition component, PPP1R10/PNUTS also acts as a nuclear targeting subunit for the PNUTS-PP1 complex. In some context, PPP1R10/PNUTS also acts as an inhibitor of protein phosphatase 1 (PP1) activity by preventing access to substrates, such as RB. This is Serine/threonine-protein phosphatase 1 regulatory subunit 10 (PPP1R10) from Pan troglodytes (Chimpanzee).